Consider the following 221-residue polypeptide: MSDSEEESLDRQLKIVVLGDGTSGKTSLATCFAQETFGKQYKQTIGLDFFLRRITLPGSLNVTLQVWDIGGQTIGGKMLDKYIYGAQGVLLVYDVTNYQSFENLEDWYSVVKKVSEESETQPLVALVGNKIDLEHMRTVKPEKHLRFCQENGFSSHFVSAKTGDSVFLCFQKVAAEILGIKLNKAEIEQSQRVVKADIVNYNQEPMSRTVNPPRSSMCAVQ.

Ser2 carries the post-translational modification N-acetylserine. The residue at position 8 (Ser8) is a Phosphoserine. The GTP site is built by Gly21, Gly24, Lys25, Thr26, Ser27, Gly38, Lys39, Tyr41, and Thr44. Thr26 serves as a coordination point for Mg(2+). A switch I region spans residues 35–49; sequence ETFGKQYKQTIGLDF. Residues Thr44 and Asp68 each coordinate Mg(2+). The segment at 68–85 is switch II; it reads DIGGQTIGGKMLDKYIYG. The GTP site is built by Gly71, Asn129, Lys130, Asp132, Ala160, and Lys161. Position 218 is a cysteine methyl ester (Cys218). Cys218 carries S-farnesyl cysteine lipidation. Positions 219 to 221 are cleaved as a propeptide — removed in mature form; that stretch reads AVQ.

Belongs to the small GTPase superfamily. Rab family. In terms of assembly, interacts (prenylated form) with PDE6D; the interaction promotes RAB28 delivery to the photoreceptor outer segments. Interacts with KCNJ13; the interaction may facilitate cone outer segments phagocytosis. Interacts with RELA; the interaction contributes to RELA transport from cytoplasm to nucleus. The cofactor is Mg(2+). Isoprenylated.

Its subcellular location is the cell membrane. The protein localises to the cytoplasm. It localises to the cytoskeleton. It is found in the cilium basal body. The protein resides in the nucleus. It catalyses the reaction GTP + H2O = GDP + phosphate + H(+). Its activity is regulated as follows. Regulated by guanine nucleotide exchange factors (GEFs) which promote the exchange of bound GDP for free GTP. Regulated by GTPase activating proteins (GAPs) which increase the GTP hydrolysis activity. Inhibited by GDP dissociation inhibitors (GDIs). In terms of biological role, the small GTPases Rab are key regulators of intracellular membrane trafficking, from the formation of transport vesicles to their fusion with membranes. Rabs cycle between an inactive GDP-bound form and an active GTP-bound form that is able to recruit to membranes different sets of downstream effectors directly responsible for vesicle formation, movement, tethering and fusion. RAB28 is required for shedding and phagocytosis of cone cell outer segments (OS) discs in the retina. Also participates in nuclear factor kappa-B p65/RELA nuclear transport in endothelial cells. This chain is Ras-related protein Rab-28 (RAB28), found in Bos taurus (Bovine).